Consider the following 339-residue polypeptide: DNA-directed RNA polymerase subunit alpha (339 aa).

Positions 1–235 (MVLQKNWQSL…DQLQLFINFD (235 aa)) are alpha N-terminal domain (alpha-NTD). The segment at 251 to 339 (FNRNLLRKVD…DLAKRLDEPF (89 aa)) is alpha C-terminal domain (alpha-CTD).

This sequence belongs to the RNA polymerase alpha chain family. As to quaternary structure, homodimer. The RNAP catalytic core consists of 2 alpha, 1 beta, 1 beta' and 1 omega subunit. When a sigma factor is associated with the core the holoenzyme is formed, which can initiate transcription.

It carries out the reaction RNA(n) + a ribonucleoside 5'-triphosphate = RNA(n+1) + diphosphate. Its function is as follows. DNA-dependent RNA polymerase catalyzes the transcription of DNA into RNA using the four ribonucleoside triphosphates as substrates. The sequence is that of DNA-directed RNA polymerase subunit alpha from Gluconacetobacter diazotrophicus (strain ATCC 49037 / DSM 5601 / CCUG 37298 / CIP 103539 / LMG 7603 / PAl5).